The chain runs to 339 residues: MASTAFVCAEPEGDALPPSLQNLLDQDSLKWIFVGGKGGVGKTTTSCSLAIQLAAVRESVLLISTDPAHNLSDAFSQKFGKEASKVNGFTNLFAMEIDPSASMQDMVESGDDSGMNGMMQDLAFAIPGIDEAMGFAEVMKHVKSMQFSAIVFDTAPTGHTLRFLSFPSVLEKALGKLSGLSGRFGPMLNQIGSMMGGGLNTSEMFEKLESMREVVTEVNAQFKNPDLTTFVPVMISEFLSLYETERLIQELTQYQIDVHDIVVNQLLYPENDSQCKHCKVRWTQQQKYLKEAYELYGEDFHIVRMPLLSQEVRGTDALKKCLLIEPYKAGQVVDLSASS.

37–44 (KGGVGKTT) serves as a coordination point for ATP. Aspartate 66 is an active-site residue. ATP contacts are provided by glutamate 237 and asparagine 264. Zn(2+) contacts are provided by cysteine 275 and cysteine 278.

The protein belongs to the arsA ATPase family. Homodimer.

The protein localises to the cytoplasm. It localises to the endoplasmic reticulum. In terms of biological role, ATPase required for the post-translational delivery of tail-anchored (TA) proteins to the endoplasmic reticulum. Recognizes and selectively binds the transmembrane domain of TA proteins in the cytosol. This complex then targets to the endoplasmic reticulum by membrane-bound receptors, where the tail-anchored protein is released for insertion. This process is regulated by ATP binding and hydrolysis. ATP binding drives the homodimer towards the closed dimer state, facilitating recognition of newly synthesized TA membrane proteins. ATP hydrolysis is required for insertion. Subsequently, the homodimer reverts towards the open dimer state, lowering its affinity for the membrane-bound receptor, and returning it to the cytosol to initiate a new round of targeting. This chain is ATPase GET3, found in Rhodotorula glutinis (Yeast).